We begin with the raw amino-acid sequence, 395 residues long: Renin (395 aa).

An N-terminal signal peptide occupies residues 1-21 (MLQSWEFVLLISCFLCFSSDA). Positions 22–43 (LQRISLKKMPSIRETLQEMGMK) are cleaved as a propeptide — activation peptide. N-linked (GlcNAc...) asparagine glycosylation occurs at Asn64. The region spanning 79-392 (YYGEISIGTP…DRQNNRIGFA (314 aa)) is the Peptidase A1 domain. Asp97 is an active-site residue. Cystine bridges form between Cys110-Cys117 and Cys274-Cys278. Asp283 is a catalytic residue. A disulfide bridge links Cys316 with Cys351.

The protein belongs to the peptidase A1 family. N-glycosylated. As to expression, expressed by the venom gland (at protein level).

Its subcellular location is the secreted. The catalysed reaction is Cleavage of Leu-|-Xaa bond in angiotensinogen to generate angiotensin I.. Its activity is regulated as follows. Inhibited completely by aspartyl protease inhibitor pepstatin A, but not by the serine- or metalloproteinase inhibitors PMSF or EDTA. Renin is a highly specific endopeptidase, whose only known function is to generate angiotensin I from angiotensinogen in the plasma, initiating a cascade of reactions that produce an elevation of blood pressure and increased sodium retention by the kidney. This protein is also found in snake venom and shown to specifically cleave human and porcine angiotensinogen into angiotensin I. It does not have general protease activity, no cleavage of alpha or beta casein. May be directly responsible for elevation of blood pressure in the victims of envenomation. This Echis ocellatus (Ocellated saw-scaled viper) protein is Renin.